An 83-amino-acid chain; its full sequence is Small ribosomal subunit protein bS18 (83 aa).

It belongs to the bacterial ribosomal protein bS18 family. As to quaternary structure, part of the 30S ribosomal subunit. Forms a tight heterodimer with protein bS6.

Functionally, binds as a heterodimer with protein bS6 to the central domain of the 16S rRNA, where it helps stabilize the platform of the 30S subunit. The chain is Small ribosomal subunit protein bS18 from Cytophaga hutchinsonii (strain ATCC 33406 / DSM 1761 / CIP 103989 / NBRC 15051 / NCIMB 9469 / D465).